The sequence spans 180 residues: Mitochondrial membrane protein FMP33 (180 aa).

Helical transmembrane passes span 34–54 (LYTSLLVTTLYGTGLACLYLE), 121–141 (FSIVWGFLIQLSSLIGNSTLG), and 145–165 (ILYKGSVVSVLGFPPLIYMAL).

Its subcellular location is the mitochondrion membrane. The polypeptide is Mitochondrial membrane protein FMP33 (FMP33) (Saccharomyces cerevisiae (strain ATCC 204508 / S288c) (Baker's yeast)).